Consider the following 509-residue polypeptide: ATP synthase subunit alpha (509 aa).

Residue Gly-169 to Thr-176 participates in ATP binding.

Belongs to the ATPase alpha/beta chains family. In terms of assembly, F-type ATPases have 2 components, CF(1) - the catalytic core - and CF(0) - the membrane proton channel. CF(1) has five subunits: alpha(3), beta(3), gamma(1), delta(1), epsilon(1). CF(0) has three main subunits: a(1), b(2) and c(9-12). The alpha and beta chains form an alternating ring which encloses part of the gamma chain. CF(1) is attached to CF(0) by a central stalk formed by the gamma and epsilon chains, while a peripheral stalk is formed by the delta and b chains.

The protein resides in the cell inner membrane. The enzyme catalyses ATP + H2O + 4 H(+)(in) = ADP + phosphate + 5 H(+)(out). Produces ATP from ADP in the presence of a proton gradient across the membrane. The alpha chain is a regulatory subunit. The chain is ATP synthase subunit alpha from Methylocella silvestris (strain DSM 15510 / CIP 108128 / LMG 27833 / NCIMB 13906 / BL2).